The chain runs to 353 residues: Hydrazine synthase subunit gamma (353 aa).

A signal peptide spans 1–39 (MAREMRLGGKERMKTGVVKIGLVAALGVVGLISAGGVYA). Residues Cys-102, Cys-105, and His-106 each coordinate heme c. Residues Asp-118, Leu-119, Glu-122, Gly-123, Ser-126, Asn-129, Leu-139, and Pro-141 each contribute to the Ca(2+) site. The heme c site is built by Cys-165, Cys-225, Cys-228, and His-229. One can recognise a Cytochrome c domain in the interval 209-353 (EAQKRGQKIF…QDLVEYLKAL (145 aa)). Residues Asp-296, Ser-306, Gly-307, and Thr-308 each coordinate Ca(2+). A heme c-binding site is contributed by His-332.

Part of the hydrazine synthase complex that forms an elongated dimer of heterotrimers composed of one alpha, one beta and one gamma subunit. Heme c serves as cofactor.

Its subcellular location is the anammoxosome. The catalysed reaction is hydrazine + 3 Fe(III)-[cytochrome c] + H2O = nitric oxide + 3 Fe(II)-[cytochrome c] + NH4(+) + 2 H(+). It participates in nitrogen metabolism. In terms of biological role, component of the hydrazine synthase complex that catalyzes the condensation of nitric oxide (NO) with ammonium to form hydrazine. The gamma subunit catalyzes the first half-reaction, i.e. the three-electron reduction of nitric oxide to hydroxylamine; it may obtain electrons from the triheme cytochrome c kuste2854. Is involved in anaerobic ammonium oxidation (anammox), a biological process in which nitrite is used as the electron acceptor in the conversion of ammonium to dinitrogen gas (N2) and water; this bacterial process has a major role in the Earth's nitrogen cycle and has been estimated to synthesize up to 50% of the dinitrogen gas emitted into our atmosphere from the oceans. The chain is Hydrazine synthase subunit gamma from Kuenenia stuttgartiensis.